A 301-amino-acid polypeptide reads, in one-letter code: MKDISFSVVIPAYNASESIITTLDCLNEQSYKNFDVIIVDDKSADAQKLAEVVSSERYSGLKINLVLSETKLNGAGARNRGIDLATGDYVCFLDADDEWHKDKLQQNLSLIERLEGQGDRRFIIYSQVNIIQDGSFLKVMPLKPVGEHESIAEYLFGCYGFIQTSTIVLKREDAAEIRFDERYIRHQDYDLCIRADKLGFKFVMIAQPLANYHMVTRFGSQHKGESVKYSLFWLDAMKPHLTRRDVYTYKAYKLPLRYKMDGKSLQASLSFARYFFLTNKDNRNDFLKRLMNKLRTRLTGK.

This sequence belongs to the glycosyltransferase 2 family.

It functions in the pathway glycan metabolism; exopolysaccharide biosynthesis. In terms of biological role, involved in the biosynthesis of amylovoran, which functions as a virulence factor. May function as a glycosyl transferase which transfers galactose from UDP-galactose to a lipid-linked amylovoran-subunit precursor. This is Amylovoran biosynthesis glycosyltransferase AmsB (amsB) from Erwinia amylovora (Fire blight bacteria).